We begin with the raw amino-acid sequence, 330 residues long: mRNA-capping enzyme (330 aa).

Lys-82 acts as the N6-GMP-lysine intermediate in catalysis.

The protein belongs to the eukaryotic GTase family. Monomer. It depends on Mg(2+) as a cofactor. Mn(2+) serves as cofactor.

It carries out the reaction a 5'-end diphospho-ribonucleoside in mRNA + GTP + H(+) = a 5'-end (5'-triphosphoguanosine)-ribonucleoside in mRNA + diphosphate. In terms of biological role, mRNA capping. Transfers a GMP cap onto the end of mRNA that terminates with a 5'-diphosphate tail. The polypeptide is mRNA-capping enzyme (Chlorella (PBCV-1)).